The sequence spans 387 residues: Zinc finger transcription factor YY1 (387 aa).

5 consecutive C2H2-type zinc fingers follow at residues 79 to 103 (FLCS…SHIH), 108 to 132 (YVCD…YLIH), 138 to 162 (YICT…MKTH), 168 to 193 (HICP…AAYH), and 230 to 255 (YACP…KREH). The tract at residues 201 to 290 (TPKYTPPAEK…DDGSDQDVYR (90 aa)) is MED18-binding. The tract at residues 258 to 387 (HLQEENADTP…DDDEETEYED (130 aa)) is disordered. The residue at position 284 (Ser-284) is a Phosphoserine. The segment covering 291-305 (KHASNGKGQTHKQQS) has biased composition (basic residues). The Nuclear localization signal motif lies at 319 to 326 (GKKGSTSS). Residues 339-367 (AKETFEEVEREEEEDSEETEEDRDNVEDG) are a coiled coil. 2 stretches are compositionally biased toward acidic residues: residues 344–363 (EEVE…DRDN) and 373–387 (NNED…EYED).

Interacts with MED18 to suppress disease susceptibility via the repression of genes glutaredoxins GRX480, GRXS13 and thioredoxin TRX-h5. Mostly expressed in flowers, to a lower extent in seedlings, stems and leaves, and, at low levels, in roots and senescent leaves.

It is found in the nucleus. In terms of biological role, dual-function transcription factor with both repression and activation activities. Binds to 5'-CCATATT-3' motif in target gene promoters (e.g. ABR1). Also binds to G-rich DNA motif 5'-GGGGGCAGTGG-3'. Regulates the expression of genes involved in diverse cellular pathways, including glucose metabolism, photosynthesis, phototropism and stress response (e.g. salt, drought and osmotic stress). Regulates plant immunity, especially during necrotrophic fungal infection (e.g. B.cinerea). Binds to ABR1 promoter and promotes its expression, thus negatively regulating the abscisic acid (ABA) signaling pathway. Represses ABA- and salt-responsive genes expression. This Arabidopsis thaliana (Mouse-ear cress) protein is Zinc finger transcription factor YY1.